A 500-amino-acid chain; its full sequence is Probable cytosol aminopeptidase (500 aa).

Mn(2+)-binding residues include lysine 262 and aspartate 267. Lysine 274 is a catalytic residue. The Mn(2+) site is built by aspartate 285, aspartate 344, and glutamate 346. Arginine 348 is an active-site residue.

It belongs to the peptidase M17 family. The cofactor is Mn(2+).

It is found in the cytoplasm. It catalyses the reaction Release of an N-terminal amino acid, Xaa-|-Yaa-, in which Xaa is preferably Leu, but may be other amino acids including Pro although not Arg or Lys, and Yaa may be Pro. Amino acid amides and methyl esters are also readily hydrolyzed, but rates on arylamides are exceedingly low.. It carries out the reaction Release of an N-terminal amino acid, preferentially leucine, but not glutamic or aspartic acids.. In terms of biological role, presumably involved in the processing and regular turnover of intracellular proteins. Catalyzes the removal of unsubstituted N-terminal amino acids from various peptides. In Ehrlichia ruminantium (strain Gardel), this protein is Probable cytosol aminopeptidase.